A 242-amino-acid polypeptide reads, in one-letter code: Biosynthetic peptidoglycan transglycosylase (242 aa).

A helical transmembrane segment spans residues 19–39; that stretch reads LMVVLAVFWGGGIALFSVAPV.

Belongs to the glycosyltransferase 51 family.

It localises to the cell inner membrane. It catalyses the reaction [GlcNAc-(1-&gt;4)-Mur2Ac(oyl-L-Ala-gamma-D-Glu-L-Lys-D-Ala-D-Ala)](n)-di-trans,octa-cis-undecaprenyl diphosphate + beta-D-GlcNAc-(1-&gt;4)-Mur2Ac(oyl-L-Ala-gamma-D-Glu-L-Lys-D-Ala-D-Ala)-di-trans,octa-cis-undecaprenyl diphosphate = [GlcNAc-(1-&gt;4)-Mur2Ac(oyl-L-Ala-gamma-D-Glu-L-Lys-D-Ala-D-Ala)](n+1)-di-trans,octa-cis-undecaprenyl diphosphate + di-trans,octa-cis-undecaprenyl diphosphate + H(+). It participates in cell wall biogenesis; peptidoglycan biosynthesis. Peptidoglycan polymerase that catalyzes glycan chain elongation from lipid-linked precursors. The chain is Biosynthetic peptidoglycan transglycosylase from Shigella dysenteriae serotype 1 (strain Sd197).